Reading from the N-terminus, the 209-residue chain is Thiamine-phosphate synthase 1 (209 aa).

4-amino-2-methyl-5-(diphosphooxymethyl)pyrimidine-binding positions include 39–43 and Asn-74; that span reads QFREK. Asp-75 and Asp-94 together coordinate Mg(2+). Ser-112 contributes to the 4-amino-2-methyl-5-(diphosphooxymethyl)pyrimidine binding site. 138–140 lines the 2-[(2R,5Z)-2-carboxy-4-methylthiazol-5(2H)-ylidene]ethyl phosphate pocket; it reads TQS. Residue Lys-141 participates in 4-amino-2-methyl-5-(diphosphooxymethyl)pyrimidine binding. 2-[(2R,5Z)-2-carboxy-4-methylthiazol-5(2H)-ylidene]ethyl phosphate-binding positions include Gly-170 and 190–191; that span reads IS.

The protein belongs to the thiamine-phosphate synthase family. Requires Mg(2+) as cofactor.

It catalyses the reaction 2-[(2R,5Z)-2-carboxy-4-methylthiazol-5(2H)-ylidene]ethyl phosphate + 4-amino-2-methyl-5-(diphosphooxymethyl)pyrimidine + 2 H(+) = thiamine phosphate + CO2 + diphosphate. The catalysed reaction is 2-(2-carboxy-4-methylthiazol-5-yl)ethyl phosphate + 4-amino-2-methyl-5-(diphosphooxymethyl)pyrimidine + 2 H(+) = thiamine phosphate + CO2 + diphosphate. It carries out the reaction 4-methyl-5-(2-phosphooxyethyl)-thiazole + 4-amino-2-methyl-5-(diphosphooxymethyl)pyrimidine + H(+) = thiamine phosphate + diphosphate. It participates in cofactor biosynthesis; thiamine diphosphate biosynthesis; thiamine phosphate from 4-amino-2-methyl-5-diphosphomethylpyrimidine and 4-methyl-5-(2-phosphoethyl)-thiazole: step 1/1. Functionally, condenses 4-methyl-5-(beta-hydroxyethyl)thiazole monophosphate (THZ-P) and 2-methyl-4-amino-5-hydroxymethyl pyrimidine pyrophosphate (HMP-PP) to form thiamine monophosphate (TMP). This Streptococcus pneumoniae (strain ATCC BAA-255 / R6) protein is Thiamine-phosphate synthase 1.